We begin with the raw amino-acid sequence, 745 residues long: A-kinase anchor protein 5 (745 aa).

The tract at residues 1-121 (METSVSEIQV…KKKAKSRLKF (121 aa)) is disordered. The tract at residues 1–164 (METSVSEIQV…EIKAQTQPDD (164 aa)) is essential to the intracellular anchoring function. Phosphoserine is present on residues S4 and S22. C36 carries S-palmitoyl cysteine lipidation. Residues 37-50 (FKRRKKANKTKPKA) show a composition bias toward basic residues. Basic and acidic residues-rich tracts occupy residues 54–63 (TAEETKKHTP) and 90–100 (SEPAKKQKPPE). Positions 74–94 (AGAWASIKGLVTHRKRSEPAK) match the AKAP CaM-binding motif. C123 carries the S-palmitoyl cysteine lipid modification. Residues 162 to 175 (PDDQAIQAGSTQGL) are compositionally biased toward polar residues. 2 disordered regions span residues 162–195 (PDDQAIQAGSTQGLQEGVLVRDGKKSQESHISNS) and 215–392 (AIQM…DHTE). Composition is skewed to basic and acidic residues over residues 180 to 189 (LVRDGKKSQE) and 222 to 231 (ELEKETKVIT). A compositionally biased stretch (polar residues) spans 234–268 (PSVQTQRASLLESSAAGSPRSVTSAAPPSPATTHQ). Positions 285–300 (GKDDRRKTAAEEKKSG) are enriched in basic and acidic residues. Residues 304–312 (LGQAEEAAV) form a 1; approximate repeat. The 28 X 8 AA repeats of V-G-Q-A-E-E-A-T stretch occupies residues 304–628 (LGQAEEAAVG…PTVDQAEEAI (325 aa)). One copy of the 2; approximate repeat lies at 320-327 (LSQAGEAT). A 3; approximate repeat occupies 328-335 (AGHPEEAT). Residues 348–355 (LSQAEETT) form a 4; approximate repeat. The 5; approximate repeat unit spans residues 356-363 (VAQAKETV). The 6; approximate repeat unit spans residues 364-395 (LSQAKEGELSQAKKATVGQAEEATIDHTEKVT). One copy of the 7; approximate repeat lies at 420–436 (LSQAKEATVVGQAEEAT). The stretch at 445–452 (VGQAEEAT) is one 8; approximate repeat. 5 repeat units span residues 461–468 (VDQAEEAT), 469–476 (VGQAEEAT), 477–484 (VGQAEEAT), 485–492 (VDWAEKPT), and 493–500 (VGQAEEAT). Residues 466 to 560 (EATVGQAEEA…QAEEATVGQA (95 aa)) are disordered. One copy of the 14; approximate repeat lies at 501–508 (VGQAEEAT). The stretch at 517-524 (VDQAEEAT) is one 15; approximate repeat. 4 consecutive repeat copies span residues 525-532 (VGQAEEAT), 533-540 (VGHTEKVT), 541-548 (VDHAEEAT), and 549-556 (VGQAEEAT). Basic and acidic residues predominate over residues 535 to 546 (HTEKVTVDHAEE). The 20; approximate repeat unit spans residues 557–564 (VGQAEKVT). Copy 21 of the repeat occupies 565–572 (VDHAEEAT). Residues 573–580 (VGQAEEAT) form a 22; approximate repeat. The stretch at 581–588 (VGQAEKVT) is one 23; approximate repeat. The stretch at 589–596 (VDHAEEAT) is one 24; approximate repeat. Copy 25 of the repeat occupies 597–604 (VGQAEEAT). Residues 605–612 (VGQAEKVT) form a 26; approximate repeat. Residues 613–620 (VDQAEEPT) form a 27; approximate repeat. A disordered region spans residues 617–651 (EEPTVDQAEEAISSHAPDLKENGIDTEKPRSEESK). The stretch at 621–628 (VDQAEEAI) is one 28; approximate repeat. Over residues 633-651 (PDLKENGIDTEKPRSEESK) the composition is skewed to basic and acidic residues. The tract at residues 706 to 727 (YETLLIETASSLVKNAIELSVE) is RII-beta subunit binding domain. Residues 728–745 (QLVNEMVSEDNQINTLFQ) are tethers NFATC2 to CRAC channels.

In terms of assembly, binding protein for dimer of the RII-beta regulatory subunit of cAMP-dependent protein kinase (PKA) and also for the protein kinase C (PKC) and the phosphatase calcineurin (PP2B). Each enzyme is inhibited when bound to the anchoring protein. Also binds the beta2-adrenergic receptor. Part of a complex containing AKAP5, ADCY5, ADCY6 and PDE4C. Interacts with ADCY8, and enhances its phosphorylation at lipid rafts. Interacts with ORAI1 (isoform alpha) (via N-terminus) upon store depletion and in response to LTC4. Does not interact with ORAI2 and ORAI3 paralogs. Interacts (via leucine zipper domain) with NFATC2/NFAT1. Interacts with calmodulin; the interaction is calcium-independent. Interacts with KCNQ2; the interaction may help KCNQ2 channel complex to retain calcium-bound calmodulin. Interacts with KCNK2; the channel is recruited to postsynaptic microdomains by AKAP5 where it can integrate neurotransmitter receptor signals. Part of a complex composed of AKAP5 and ADRB2. Post-translationally, palmitoylated. Palmitoylation at Cys-36 and Cys-123 play a key role in the targeting of AKAP5 to lipid rafts. Palmitoylation by ZDHHC2 is required for AKAP5 function in LTP-stimulated recycling endosome exocytosis.

It localises to the postsynaptic recycling endosome membrane. It is found in the cell projection. The protein localises to the dendrite. The protein resides in the postsynaptic cell membrane. Multivalent scaffold protein that anchors the cAMP-dependent protein kinase/PKA to cytoskeletal and/or organelle-associated proteins, targeting the signal carried by cAMP to specific intracellular effectors. Association with the beta2-adrenergic receptor (beta2-AR) not only regulates beta2-AR signaling pathway, but also the activation by PKA by switching off the beta2-AR signaling cascade. Plays a role in long term synaptic potentiation by regulating protein trafficking from the dendritic recycling endosomes to the plasma membrane and controlling both structural and functional plasticity at excitatory synapses. In hippocampal pyramidal neurons, recruits KCNK2/TREK-1 channel at postsynaptic dense bodies microdomains and converts it to a leak channel no longer sensitive to stimulation by arachidonic acid, acidic pH or mechanical stress, nor inhibited by Gq-coupled receptors but still under the negative control of Gs-coupled receptors. Associates with ORAI1 pore-forming subunit of CRAC channels in Ca(2+) signaling microdomains where it recruits NFATC2/NFAT1 and couples store-operated Ca(2+) influx to calmodulin and calcineurin signaling and activation of NFAT-dependent transcriptional responses. This chain is A-kinase anchor protein 5 (Akap5), found in Mus musculus (Mouse).